Here is a 297-residue protein sequence, read N- to C-terminus: Acetylglutamate kinase (297 aa).

Substrate-binding positions include 68 to 69 (GG), R90, and N189.

The protein belongs to the acetylglutamate kinase family. ArgB subfamily.

It localises to the cytoplasm. The enzyme catalyses N-acetyl-L-glutamate + ATP = N-acetyl-L-glutamyl 5-phosphate + ADP. It participates in amino-acid biosynthesis; L-arginine biosynthesis; N(2)-acetyl-L-ornithine from L-glutamate: step 2/4. Functionally, catalyzes the ATP-dependent phosphorylation of N-acetyl-L-glutamate. The protein is Acetylglutamate kinase of Akkermansia muciniphila (strain ATCC BAA-835 / DSM 22959 / JCM 33894 / BCRC 81048 / CCUG 64013 / CIP 107961 / Muc).